The sequence spans 250 residues: Ribonuclease PH (250 aa).

Phosphate is bound by residues R99 and 137–139; that span reads GTR.

The protein belongs to the RNase PH family. In terms of assembly, homohexameric ring arranged as a trimer of dimers.

It carries out the reaction tRNA(n+1) + phosphate = tRNA(n) + a ribonucleoside 5'-diphosphate. In terms of biological role, phosphorolytic 3'-5' exoribonuclease that plays an important role in tRNA 3'-end maturation. Removes nucleotide residues following the 3'-CCA terminus of tRNAs; can also add nucleotides to the ends of RNA molecules by using nucleoside diphosphates as substrates, but this may not be physiologically important. Probably plays a role in initiation of 16S rRNA degradation (leading to ribosome degradation) during starvation. This Bordetella parapertussis (strain 12822 / ATCC BAA-587 / NCTC 13253) protein is Ribonuclease PH.